A 112-amino-acid chain; its full sequence is Iron-sulfur cluster insertion protein ErpA (112 aa).

3 residues coordinate iron-sulfur cluster: Cys-40, Cys-104, and Cys-106.

The protein belongs to the HesB/IscA family. As to quaternary structure, homodimer. The cofactor is iron-sulfur cluster.

Its function is as follows. Required for insertion of 4Fe-4S clusters for at least IspG. This chain is Iron-sulfur cluster insertion protein ErpA, found in Pseudoalteromonas translucida (strain TAC 125).